The following is an 80-amino-acid chain: GNCIELNNDCDGSKDDCQCCRDNAYCSCYNFFGIKSGCKCSVGNSGTGYSVCLKKLECPNRRAWTSWKKECTKPCIGKRC.

Cystine bridges form between C3/C20, C10/C26, C17/C52, C19/C40, C28/C38, C58/C71, and C75/C80.

In terms of tissue distribution, expressed by the venom gland.

It is found in the secreted. Omega-agatoxin are antagonists of voltage-gated calcium channels (Cav). Induces rapid general flaccid paralysis followed by death when injected into the cerebral ventricle of mice at dose levels of 3 ug per mouse. In Phoneutria nigriventer (Brazilian armed spider), this protein is U20-ctenitoxin-Pn1a.